We begin with the raw amino-acid sequence, 967 residues long: Leucine--tRNA ligase (967 aa).

The 'HIGH' region signature appears at proline 43–histidine 53. The 'KMSKS' region motif lies at lysine 650–serine 654. Lysine 653 is an ATP binding site.

This sequence belongs to the class-I aminoacyl-tRNA synthetase family.

The protein localises to the cytoplasm. The enzyme catalyses tRNA(Leu) + L-leucine + ATP = L-leucyl-tRNA(Leu) + AMP + diphosphate. This Pyrococcus abyssi (strain GE5 / Orsay) protein is Leucine--tRNA ligase.